The following is a 215-amino-acid chain: CASP-like protein UU3 (215 aa).

Residues 1 to 44 (MATAWESEYFDKVTPGERERAVPPMVPQQTPPPVYIQPQVSRNG) are Cytoplasmic-facing. Residues 45–65 (IVASIVLRLLTLIFAVVALAV) form a helical membrane-spanning segment. Topologically, residues 66–93 (LASNTGSFQVSTGSATSVKTIKFTILSA) are extracellular. Residues 94–114 (FTYLFAVCGVVAVYSLLLIIV) form a helical membrane-spanning segment. Over 115–128 (EMIDLAVRGFTTHT) the chain is Cytoplasmic. A helical transmembrane segment spans residues 129–149 (LVAIFVFVLDQTMAYVLISAA). The Extracellular segment spans residues 150–185 (SASANGVKVSRDESNITGYKFDISCSNLGIDDYCTK). An N-linked (GlcNAc...) asparagine glycan is attached at Asn164. The helical transmembrane segment at 186-206 (ASASVAIAFIAFLFMAITAGV) threads the bilayer. The Cytoplasmic portion of the chain corresponds to 207–215 (SARRLFKLP).

Belongs to the Casparian strip membrane proteins (CASP) family. Homodimer and heterodimers.

The protein resides in the cell membrane. This chain is CASP-like protein UU3, found in Physcomitrium patens (Spreading-leaved earth moss).